We begin with the raw amino-acid sequence, 212 residues long: Uracil phosphoribosyltransferase (212 aa).

5-phospho-alpha-D-ribose 1-diphosphate-binding positions include Arg78, Arg103, and 130–138 (DPMLATGGS). Uracil contacts are provided by residues Ile193 and 198-200 (GDA). Asp199 is a binding site for 5-phospho-alpha-D-ribose 1-diphosphate.

The protein belongs to the UPRTase family. It depends on Mg(2+) as a cofactor.

It carries out the reaction UMP + diphosphate = 5-phospho-alpha-D-ribose 1-diphosphate + uracil. It participates in pyrimidine metabolism; UMP biosynthesis via salvage pathway; UMP from uracil: step 1/1. Its activity is regulated as follows. Allosterically activated by GTP. Catalyzes the conversion of uracil and 5-phospho-alpha-D-ribose 1-diphosphate (PRPP) to UMP and diphosphate. The sequence is that of Uracil phosphoribosyltransferase from Pseudomonas entomophila (strain L48).